The chain runs to 359 residues: Homeotic protein knotted-1 (359 aa).

Disordered regions lie at residues 1-34 (MEEI…PWAS) and 213-232 (LSSG…TELP). A compositionally biased stretch (basic residues) spans 16 to 31 (GHGHGQHHHHHHHHHP). The region spanning 242–262 (ELKHHLLKKYSGYLSSLKQEL) is the ELK domain. Positions 263–326 (SKKKKKGKLP…NQRKRHWKPS (64 aa)) form a DNA-binding region, homeobox; TALE-type.

Belongs to the TALE/KNOX homeobox family. In terms of assembly, forms homodimers. Binds to MBP2C; this interaction reduces RNA binding capacity. In terms of tissue distribution, expressed in apical meristems of vegetative and floral stems as well as in the underlying ground meristem. Specifically expressed in vascular bundles developing both in the leaf and stem. Very low levels of expression in leaves.

It localises to the nucleus. The protein localises to the cell junction. The protein resides in the plasmodesma. Its subcellular location is the cytoplasm. Functionally, binds to RNA. Possible transcription factor that regulates genes involved in development. Mutations in KN-1 alter leaf development. Foci of cells along the lateral vein do not differentiate properly but continue to divide, forming knots. May participate in the switch from indeterminate to determinate cell fates. Probably binds to the DNA sequence 5'-TGAC-3'. This Zea mays (Maize) protein is Homeotic protein knotted-1 (KN-1).